Consider the following 568-residue polypeptide: Glucose-6-phosphate isomerase, cytosolic 1 (568 aa).

Glu-360 acts as the Proton donor in catalysis. Active-site residues include His-391 and Lys-516.

This sequence belongs to the GPI family. As to quaternary structure, homodimer.

It is found in the cytoplasm. It catalyses the reaction alpha-D-glucose 6-phosphate = beta-D-fructose 6-phosphate. It participates in carbohydrate degradation; glycolysis; D-glyceraldehyde 3-phosphate and glycerone phosphate from D-glucose: step 2/4. The sequence is that of Glucose-6-phosphate isomerase, cytosolic 1 (PGIC1) from Clarkia mildrediae.